The chain runs to 511 residues: Ribonuclease Y (511 aa).

The helical transmembrane segment at 3 to 23 (VGILIGIIILGVVGFIQYTLI) threads the bilayer. The 86-residue stretch at 201-286 (TVHVVALPND…EMVERAIKDV (86 aa)) folds into the KH domain. Residues 327–420 (VLKHSIEVSY…VQAADAISAA (94 aa)) enclose the HD domain.

The protein belongs to the RNase Y family.

Its subcellular location is the cell membrane. In terms of biological role, endoribonuclease that initiates mRNA decay. This is Ribonuclease Y from Clostridium perfringens (strain ATCC 13124 / DSM 756 / JCM 1290 / NCIMB 6125 / NCTC 8237 / Type A).